A 489-amino-acid polypeptide reads, in one-letter code: GTPase Der (489 aa).

EngA-type G domains lie at P30–P199 and F227–H403. Residues G36 to S43, D85 to L89, N151 to D154, G233 to S240, D280 to I284, and N345 to D348 contribute to the GTP site. Residues R404–R488 form the KH-like domain.

It belongs to the TRAFAC class TrmE-Era-EngA-EngB-Septin-like GTPase superfamily. EngA (Der) GTPase family. In terms of assembly, associates with the 50S ribosomal subunit.

In terms of biological role, GTPase that plays an essential role in the late steps of ribosome biogenesis. This chain is GTPase Der, found in Leptospira interrogans serogroup Icterohaemorrhagiae serovar copenhageni (strain Fiocruz L1-130).